The following is a 205-amino-acid chain: Protein N-terminal glutamine amidohydrolase (205 aa).

Active-site residues include C20, H74, and D90.

The protein belongs to the NTAQ1 family. Monomer.

It carries out the reaction N-terminal L-glutaminyl-[protein] + H2O = N-terminal L-glutamyl-[protein] + NH4(+). Functionally, mediates the side-chain deamidation of N-terminal glutamine residues to glutamate, an important step in N-end rule pathway of protein degradation. Conversion of the resulting N-terminal glutamine to glutamate renders the protein susceptible to arginylation, polyubiquitination and degradation as specified by the N-end rule. Does not act on substrates with internal or C-terminal glutamine and does not act on non-glutamine residues in any position. This is Protein N-terminal glutamine amidohydrolase (tun) from Drosophila erecta (Fruit fly).